A 1580-amino-acid chain; its full sequence is Transcriptional activator GLI3 (1580 aa).

N-acetylmethionine is present on Met1. Polar residues-rich tracts occupy residues 1-10 (MEAQSHSSTT) and 58-78 (ITMQPQNVQGLSKVSEEPSTS). The tract at residues 1–79 (MEAQSHSSTT…KVSEEPSTSS (79 aa)) is disordered. The residue at position 175 (Arg175) is an Omega-N-methylarginine. The disordered stretch occupies residues 368-475 (QSLGSAFGHS…DKDESKQEPE (108 aa)). Positions 401–427 (NPVQVSSGPSESSQNKPTSESAVSSTG) are enriched in polar residues. Glycyl lysine isopeptide (Lys-Gly) (interchain with G-Cter in SUMO2) cross-links involve residues Lys438 and Lys462. Residues 461–474 (VKEEGDKDESKQEP) are compositionally biased toward basic and acidic residues. 5 consecutive C2H2-type zinc fingers follow at residues 480–505 (TNCHWEGCAREFDTQEQLVHHINNDH), 513–540 (FVCRWLDCSREQKPFKAQYMLVVHMRRH), 546–570 (HKCTFEGCTKAYSRLENLKTHLRSH), 576–601 (YVCEHEGCNKAFSNASDRAKHQNRTH), and 607–632 (YVCKIPGCTKRYTDPSSLRKHVKTVH). Residues 620–728 (DPSSLRKHVK…PISNYSNSGL (109 aa)) form a disordered region. The span at 632-648 (HGPEAHVTKKQRGDIHP) shows a compositional bias: basic and acidic residues. A Phosphoserine modification is found at Ser664. Residues 684–699 (SKREECLQVKTVKAEK) show a composition bias toward basic and acidic residues. A compositionally biased stretch (low complexity) spans 703 to 726 (SQPSPGGQSSCSSQQSPISNYSNS). Residues 745–845 (DETPIMDSTI…VDVTMLNMLN (101 aa)) are mediates interaction with DZIP1. A Glycyl lysine isopeptide (Lys-Gly) (interchain with G-Cter in ubiquitin) cross-link involves residue Lys773. Residue Lys779 forms a Glycyl lysine isopeptide (Lys-Gly) (interchain with G-Cter in SUMO2); alternate linkage. Lys779 is covalently cross-linked (Glycyl lysine isopeptide (Lys-Gly) (interchain with G-Cter in ubiquitin); alternate). Residues Lys784 and Lys800 each participate in a glycyl lysine isopeptide (Lys-Gly) (interchain with G-Cter in ubiquitin) cross-link. Ser849, Ser865, Ser877, and Ser907 each carry phosphoserine; by PKA. Residues 863-882 (RSSGISPCFSSRRSSEASQA) show a composition bias toward low complexity. The interval 863-918 (RSSGISPCFSSRRSSEASQAEGRPQNVSVADSYDPISTDASRRSSEASQSDGLPSL) is disordered. The span at 908–918 (EASQSDGLPSL) shows a compositional bias: polar residues. Residues Ser980 and Ser1006 each carry the phosphoserine; by PKA modification. A disordered region spans residues 981–1042 (DGGAHGYGRR…PAMATSAEKR (62 aa)).

Belongs to the GLI C2H2-type zinc-finger protein family. In terms of assembly, the full-length GLI3 form (GLI3FL) interacts with SUFU and this interaction regulates the formation of either repressor or activator forms of GLI3. Its association with SUFU is regulated by Hh signaling and dissociation of the SUFU-GLI3 interaction requires the presence of the ciliary motor KIF3A. Interacts with KIF7. The activator form of GLI3 (GLI3A) but not the repressor form (GLI3R) can interact with TRPS1. The phosphorylated form interacts with BTRC. Interacts with ZIC1. Interacts with ZIC3 (via C2H2-type domains 3, 4 and 5); the interaction enhances its transcriptional activity. Interacts with WRD11; the interaction associates EMX1 with GLI3. Interacts with DZIP1; retains GLI3 within the cytoplasm. In terms of processing, phosphorylated on multiple sites by protein kinase A (PKA) and phosphorylation by PKA primes further phosphorylation by CK1 and GSK3. Phosphorylated by DYRK2 (in vitro). Phosphorylation is essential for its proteolytic processing. Post-translationally, transcriptional repressor GLI3R, a C-terminally truncated form, is generated from the full-length GLI3 protein (GLI3FL/GLI3-190) through proteolytic processing. This process requires PKA-primed phosphorylation of GLI3, ubiquitination of GLI3 and the presence of BTRC. GLI3FL is complexed with SUFU in the cytoplasm and is maintained in a neutral state. Without the Hh signal, the SUFU-GLI3 complex is recruited to cilia, leading to the efficient processing of GLI3FL into GLI3R. GLI3R formation leads to its dissociation from SUFU, allowing it to translocate into the nucleus, and repress Hh target genes. When Hh signaling is initiated, SUFU dissociates from GLI3FL and this has two consequences. First, GLI3R production is halted. Second, free GLI3FL translocates to the nucleus, where it is phosphorylated, destabilized, and converted to a transcriptional activator (GLI3A). Phosphorylated in vitro by ULK3.

It is found in the nucleus. The protein resides in the cytoplasm. It localises to the cell projection. The protein localises to the cilium. Has a dual function as a transcriptional activator and a repressor of the sonic hedgehog (Shh) pathway, and plays a role in limb development. The full-length GLI3 form (GLI3FL) after phosphorylation and nuclear translocation, acts as an activator (GLI3A) while GLI3R, its C-terminally truncated form, acts as a repressor. A proper balance between the GLI3 activator and the repressor GLI3R, rather than the repressor gradient itself or the activator/repressor ratio gradient, specifies limb digit number and identity. In concert with TRPS1, plays a role in regulating the size of the zone of distal chondrocytes, in restricting the zone of PTHLH expression in distal cells and in activating chondrocyte proliferation. Binds to the minimal GLI-consensus sequence 5'-GGGTGGTC-3'. Plays a role in limb and brain development. This chain is Transcriptional activator GLI3 (GLI3), found in Pan troglodytes (Chimpanzee).